A 317-amino-acid polypeptide reads, in one-letter code: Mitochondrial thiamine pyrophosphate carrier 1 (317 aa).

3 Solcar repeats span residues 12 to 110, 120 to 206, and 214 to 309; these read GTRR…TTQV, PPAL…LRPV, and PFGS…SLKL. The next 6 membrane-spanning stretches (helical) occupy residues 17 to 35, 91 to 107, 126 to 146, 181 to 198, 220 to 240, and 284 to 301; these read VVLSGGIAGLVSRFCVAPL, LMYVCYGALQFTAYRTT, FVSGAVAGGLATASTYPLDLL, GCSAAVGQIVPYMGLFFA, AAAGVIASVLAKTGVFPLDLV, and GLTVSLIKAAPASAITMW.

It belongs to the mitochondrial carrier (TC 2.A.29) family.

The protein resides in the mitochondrion inner membrane. Its function is as follows. Mitochondrial transporter that mediates uptake of thiamine pyrophosphate (ThPP) into mitochondria. The protein is Mitochondrial thiamine pyrophosphate carrier 1 (tpc1) of Neosartorya fischeri (strain ATCC 1020 / DSM 3700 / CBS 544.65 / FGSC A1164 / JCM 1740 / NRRL 181 / WB 181) (Aspergillus fischerianus).